A 183-amino-acid chain; its full sequence is Putative 3-methyladenine DNA glycosylase (183 aa).

The protein belongs to the DNA glycosylase MPG family.

The protein is Putative 3-methyladenine DNA glycosylase of Rickettsia rickettsii (strain Iowa).